The sequence spans 363 residues: Protein TAX-1 (363 aa).

Residues 129-363 are required for localization to the flagellum and for flagellar motility; the sequence is RYGNAEEILS…IPFRGVAAEQ (235 aa). 2 TPR repeats span residues 157 to 190 and 199 to 232; these read AELHQTFGLLYAADNKLDVSVKHLTCATYYLSVM and TFAYFDLANVFATKACMEAAMALYDTVKNIWLKH.

Interacts with TTC29.

It localises to the cytoplasm. The protein resides in the cytoskeleton. The protein localises to the flagellum axoneme. In terms of biological role, required for flagellum motility. This chain is Protein TAX-1, found in Trypanosoma brucei brucei (strain 927/4 GUTat10.1).